The primary structure comprises 193 residues: Acyl carrier protein phosphodiesterase (193 aa).

It belongs to the AcpH family.

The catalysed reaction is holo-[ACP] + H2O = apo-[ACP] + (R)-4'-phosphopantetheine + H(+). Converts holo-ACP to apo-ACP by hydrolytic cleavage of the phosphopantetheine prosthetic group from ACP. In Serratia proteamaculans (strain 568), this protein is Acyl carrier protein phosphodiesterase.